A 440-amino-acid polypeptide reads, in one-letter code: Xaa-Pro dipeptidase (440 aa).

Residues Asp-244, Asp-255, His-335, Glu-380, and Glu-419 each coordinate Mn(2+).

The protein belongs to the peptidase M24B family. Bacterial-type prolidase subfamily. Mn(2+) serves as cofactor.

It catalyses the reaction Xaa-L-Pro dipeptide + H2O = an L-alpha-amino acid + L-proline. In terms of biological role, splits dipeptides with a prolyl residue in the C-terminal position. This is Xaa-Pro dipeptidase from Shewanella baltica (strain OS185).